Here is a 710-residue protein sequence, read N- to C-terminus: Polyribonucleotide nucleotidyltransferase (710 aa).

Residues Asp-487 and Asp-493 each contribute to the Mg(2+) site. The 60-residue stretch at 554-613 folds into the KH domain; it reads PKIITMTINPDKIRDVIGPSGKQINKIIEETGVKIDIEQDGTVFISSIDQQMNEKAKKII. An S1 motif domain is found at 623 to 691; sequence GEIYLGKVKR…KQGRVNLSRK (69 aa).

This sequence belongs to the polyribonucleotide nucleotidyltransferase family. Requires Mg(2+) as cofactor.

It localises to the cytoplasm. It catalyses the reaction RNA(n+1) + phosphate = RNA(n) + a ribonucleoside 5'-diphosphate. Involved in mRNA degradation. Catalyzes the phosphorolysis of single-stranded polyribonucleotides processively in the 3'- to 5'-direction. The chain is Polyribonucleotide nucleotidyltransferase from Bacillus cytotoxicus (strain DSM 22905 / CIP 110041 / 391-98 / NVH 391-98).